The chain runs to 355 residues: MLISKHEERVKSILSARMENGNLRSRENTQVEFKQSFNKGNIAIYAKTMAAFSNNSGGYIIFGIKDSPRSIIGLQNSNFENIQQEDLTDSINNLFSPSINWELGSFILKEKEINSNGDVIIVQKIIGWIYTEESNIKPVIAQKNNSSEKIVNGDIFYRYRARTEKIKYAEMEQIINCRMKQERDSLFKVFEFIRNNGATNLGIVDYNNGKLSTPYGVDVVLEKNLIAKLLKKAKFIKEGSFSENEGIPVIKVTGNINLAEEVPVPLENLDETYPYIQKQLAEKLNITPQKLYALIWYFKMKESKKYHLEITTSKTNKTHKFSKFALLFLKEKIIELDENKNELNNIISKFNNRKK.

Position 58–65 (58–65 (GYIIFGIK)) interacts with ATP.

This is an uncharacterized protein from Ureaplasma parvum serovar 3 (strain ATCC 700970).